A 167-amino-acid polypeptide reads, in one-letter code: MANNQASLLLQKQLKDLCKKPVDGFSAGLVDEKNVFQWSVSIMGPPDTLYEGGFFNAIMSFPENYPVSPPTVTFTSEMWHPNVYSDGKVCISILHPPGDDPHGYELASERWTPVHTVESIVLSIISMLSGPNDESPANVEAAKEWRDNRAEFRKKVSRCVRRSQEML.

Ala2 is subject to N-acetylalanine. The region spanning 5–165 (QASLLLQKQL…VSRCVRRSQE (161 aa)) is the UBC core domain. Cys90 serves as the catalytic Glycyl thioester intermediate.

The protein belongs to the ubiquitin-conjugating enzyme family.

The enzyme catalyses S-ubiquitinyl-[E1 ubiquitin-activating enzyme]-L-cysteine + [E2 ubiquitin-conjugating enzyme]-L-cysteine = [E1 ubiquitin-activating enzyme]-L-cysteine + S-ubiquitinyl-[E2 ubiquitin-conjugating enzyme]-L-cysteine.. Its pathway is protein modification; protein ubiquitination. Accepts the ubiquitin from the E1 complex and catalyzes its covalent attachment to other proteins. Involved in the formation of multiubiquitin chains. Signal the protein for selective degradation. The sequence is that of Ubiquitin-conjugating enzyme E2 14 (UBC14) from Arabidopsis thaliana (Mouse-ear cress).